Reading from the N-terminus, the 247-residue chain is Neurotrophic factor BDNF precursor form (247 aa).

An N-terminal signal peptide occupies residues 1-18 (MTILFLTMVISYFGCMKA). The propeptide occupies 19-128 (APMKEANARG…AANMSMRVRR (110 aa)). Residue Asn-121 is glycosylated (N-linked (GlcNAc...) asparagine). Intrachain disulfides connect Cys-141/Cys-208, Cys-186/Cys-237, and Cys-196/Cys-239.

It belongs to the NGF-beta family. Monomers and homodimers. Binds to NTRK2/TRKB. Can form heterodimers with other neurotrophin family members, such as NTF3 and NTF4 (in vitro), but the physiological relevance of this is not clear. BDNF precursor form: interacts with the heterodimer formed by NGFR and SORCS2. Mature BDNF has much lower affinity for the heterodimer formed by NGFR and SORCS2. In terms of processing, N-glycosylated and glycosulfated, contrary to mature BDNF. Mature BDNF is produced by proteolytic removal of the propeptide, catalyzed by a FURIN family member. In addition, the precursor form is proteolytically cleaved within the propeptide, but this is not an obligatory intermediate for the production of mature BDNF. Can be converted into mature BDNF by plasmin (PLG).

The protein resides in the secreted. In terms of biological role, important signaling molecule that activates signaling cascades downstream of NTRK2. During development, promotes the survival and differentiation of selected neuronal populations of the peripheral and central nervous systems. Participates in axonal growth, pathfinding and in the modulation of dendritic growth and morphology. Major regulator of synaptic transmission and plasticity at adult synapses in many regions of the CNS. The versatility of BDNF is emphasized by its contribution to a range of adaptive neuronal responses including long-term potentiation (LTP), long-term depression (LTD), certain forms of short-term synaptic plasticity, as well as homeostatic regulation of intrinsic neuronal excitability. Important signaling molecule that activates signaling cascades downstream of NTRK2. Activates signaling cascades via the heterodimeric receptor formed by NGFR and SORCS2. Signaling via NGFR and SORCS2 plays a role in synaptic plasticity and long-term depression (LTD). Binding to NGFR and SORCS2 promotes neuronal apoptosis. Promotes neuronal growth cone collapse. The polypeptide is Neurotrophic factor BDNF precursor form (BDNF) (Equus caballus (Horse)).